A 440-amino-acid polypeptide reads, in one-letter code: MIKDATAITLNPISYIEGEVRLPGSKSLSNRALLLSALAKGKTTLTNLLDSDDVRHMLNALKELGVTYQLSEDKSVCEIEGLGRAFEWQSGLALFLGNAGTAMRPLTAALCLSTPNKEGKNEIVLTGEPRMKERPIQHLVDALCQAGAEIQYLEQEGYPPIAIRNTGLKGGRIQIDGSVSSQFLTALLMAAPMAEADTEIEIIGELVSKPYIDITLKMMQTFGVEVENQAYQRFLVKGHQQYQSPHRFLVEGDASSASYFLAAAAIKGKVKVTGVGKNSIQGDRLFADVLEKMGAHITWGDDFIQVEKGNLKGIDMDMNHIPDAAMTIATTALFAEGETVIRNIYNWRVKETDRLTAMATELRKVGAEVEEGEDFIRIQPLNLAQFQHAEIETYNDHRMAMCFALIALSQTSVTILDPSCTAKTFPTFFDTFLRLTHAES.

The 3-phosphoshikimate site is built by Lys-26, Ser-27, and Arg-31. Phosphoenolpyruvate is bound at residue Lys-26. Residues Gly-100 and Arg-134 each contribute to the phosphoenolpyruvate site. The 3-phosphoshikimate site is built by Ser-180, Ser-181, Gln-182, Ser-208, Asp-323, Asn-346, and Lys-350. Residue Gln-182 coordinates phosphoenolpyruvate. Asp-323 functions as the Proton acceptor in the catalytic mechanism. Residues Arg-354, Arg-398, and Lys-423 each coordinate phosphoenolpyruvate.

This sequence belongs to the EPSP synthase family. Monomer.

The protein localises to the cytoplasm. The enzyme catalyses 3-phosphoshikimate + phosphoenolpyruvate = 5-O-(1-carboxyvinyl)-3-phosphoshikimate + phosphate. The protein operates within metabolic intermediate biosynthesis; chorismate biosynthesis; chorismate from D-erythrose 4-phosphate and phosphoenolpyruvate: step 6/7. In terms of biological role, catalyzes the transfer of the enolpyruvyl moiety of phosphoenolpyruvate (PEP) to the 5-hydroxyl of shikimate-3-phosphate (S3P) to produce enolpyruvyl shikimate-3-phosphate and inorganic phosphate. The protein is 3-phosphoshikimate 1-carboxyvinyltransferase of Pasteurella multocida (strain Pm70).